We begin with the raw amino-acid sequence, 265 residues long: Ubiquinone biosynthesis protein COQ4 homolog, mitochondrial (265 aa).

Positions 162, 163, 166, and 178 each coordinate Zn(2+).

It belongs to the COQ4 family. Component of a multi-subunit COQ enzyme complex. Requires Zn(2+) as cofactor.

The protein resides in the mitochondrion inner membrane. The catalysed reaction is a 4-hydroxy-3-methoxy-5-(all-trans-polyprenyl)benzoate + H(+) = a 2-methoxy-6-(all-trans-polyprenyl)phenol + CO2. Its pathway is cofactor biosynthesis; ubiquinone biosynthesis. Lyase that catalyzes the C1-decarboxylation of 4-hydroxy-3-methoxy-5-(all-trans-polyprenyl)benzoic acid into 2-methoxy-6-(all-trans-polyprenyl)phenol during ubiquinone biosynthesis. In Drosophila willistoni (Fruit fly), this protein is Ubiquinone biosynthesis protein COQ4 homolog, mitochondrial.